We begin with the raw amino-acid sequence, 404 residues long: Probable thioredoxin reductase ARB_06224 (404 aa).

The signal sequence occupies residues 1 to 22 (MGVQRLALALIAFTSALTSVIA). Position 67–75 (67–75 (DEGIYRNGA)) interacts with FAD. An intrachain disulfide couples cysteine 172 to cysteine 175. Asparagine 213 carries an N-linked (GlcNAc...) asparagine glycan. Residue 334–343 (DANNDGSTNG) coordinates FAD.

This sequence belongs to the class-II pyridine nucleotide-disulfide oxidoreductase family. As to quaternary structure, homodimer. It depends on FAD as a cofactor.

It is found in the secreted. It carries out the reaction [thioredoxin]-dithiol + NADP(+) = [thioredoxin]-disulfide + NADPH + H(+). This Arthroderma benhamiae (strain ATCC MYA-4681 / CBS 112371) (Trichophyton mentagrophytes) protein is Probable thioredoxin reductase ARB_06224.